The primary structure comprises 98 residues: NADH-ubiquinone oxidoreductase chain 4L (98 aa).

3 helical membrane-spanning segments follow: residues 1–21 (MSLT…GLLM), 29–49 (SLLC…MAIL), and 61–81 (IILL…LVMV).

The protein belongs to the complex I subunit 4L family. As to quaternary structure, core subunit of respiratory chain NADH dehydrogenase (Complex I) which is composed of 45 different subunits.

It is found in the mitochondrion inner membrane. The catalysed reaction is a ubiquinone + NADH + 5 H(+)(in) = a ubiquinol + NAD(+) + 4 H(+)(out). In terms of biological role, core subunit of the mitochondrial membrane respiratory chain NADH dehydrogenase (Complex I) which catalyzes electron transfer from NADH through the respiratory chain, using ubiquinone as an electron acceptor. Part of the enzyme membrane arm which is embedded in the lipid bilayer and involved in proton translocation. This is NADH-ubiquinone oxidoreductase chain 4L (MT-ND4L) from Vampyressa melissa (Melissa's yellow-eared bat).